The chain runs to 747 residues: Superkiller protein 7 (747 aa).

The tract at residues 14–51 is disordered; that stretch reads KSKGLLSADQSHSTSKSASLLERLHKNRETKDNNAETK. The span at 21-31 shows a compositional bias: polar residues; sequence ADQSHSTSKSA. Residues 35-51 show a composition bias toward basic and acidic residues; the sequence is ERLHKNRETKDNNAETK. Phosphoserine is present on residues S88 and S90. Residues 89 to 117 form a disordered region; sequence NSDLEKQGKSVTLDSKENELPTKRKSPDD. A tr-type G domain is found at 265 to 503; it reads PLNLTCLFLG…YVPEWYEGPT (239 aa). The tract at residues 274-281 is G1; that stretch reads GDTNAGKS. Position 274–281 (274–281) interacts with GTP; the sequence is GDTNAGKS. A G2 region spans residues 331-335; that stretch reads GFSMF. Residues 356–359 form a G3 region; the sequence is DTPG. Residues 356–360 and 427–430 each bind GTP; these read DTPGS and NKAD. Positions 427-430 are G4; that stretch reads NKAD. Residues 467-469 form a G5 region; that stretch reads SGL.

Belongs to the TRAFAC class translation factor GTPase superfamily. Classic translation factor GTPase family. In terms of assembly, interacts with the exosome and with the SKI complex composed of at least SKI2, SKI3 and SKI8. Interacts directly with SKI3 and SKI8.

The protein resides in the cytoplasm. In terms of biological role, represses the expression of non-poly(A) mRNAs like L-A or M viruses and is therefore involved in antiviral system. Mediates interactions via its N-terminus between the exosome and the SKI complex which operate in the 3'-to-5' mRNA-decay pathway. By interacting with NAM7, is also required for nonsense-mediated 3'-to-5' mRNA-decay (NMD). May recognize a stalled 80S ribosome at the 3'-end of a nonstop mRNA which leads to the recruitment of the exosome and SKI complexes to the mRNAs to be degraded. In Saccharomyces cerevisiae (strain ATCC 204508 / S288c) (Baker's yeast), this protein is Superkiller protein 7 (SKI7).